The sequence spans 107 residues: Iron-sulfur cluster assembly protein CyaY (107 aa).

This sequence belongs to the frataxin family.

Its function is as follows. Involved in iron-sulfur (Fe-S) cluster assembly. May act as a regulator of Fe-S biogenesis. This Thioalkalivibrio sulfidiphilus (strain HL-EbGR7) protein is Iron-sulfur cluster assembly protein CyaY.